The sequence spans 325 residues: Protease HtpX homolog 2 (325 aa).

2 helical membrane-spanning segments follow: residues 17–37 (IAIL…FFGF) and 42–62 (LLIT…WLFG). Residue H146 coordinates Zn(2+). E147 is a catalytic residue. Zn(2+) is bound at residue H150. 2 helical membrane-spanning segments follow: residues 158-178 (LLLA…GLWW) and 195-215 (ILFL…LFVL). Zn(2+) is bound at residue E222.

The protein belongs to the peptidase M48B family. It depends on Zn(2+) as a cofactor.

The protein resides in the cell membrane. This Sulfurisphaera tokodaii (strain DSM 16993 / JCM 10545 / NBRC 100140 / 7) (Sulfolobus tokodaii) protein is Protease HtpX homolog 2.